A 114-amino-acid polypeptide reads, in one-letter code: Cyclin-dependent kinase 2-associated protein 1 (114 aa).

Residues 18–57 (AGSVHSPSTSMATSSQYRQLLSDYGPPSLGYTQGTGNSQV) are disordered. Positions 19 to 24 (GSVHSP) are interaction with CDK2AP2. Positions 20 to 36 (SVHSPSTSMATSSQYRQ) are enriched in polar residues. At Ser-45 the chain carries Phosphoserine; by IKKE. The segment covering 47–57 (GYTQGTGNSQV) has biased composition (polar residues).

It belongs to the CDK2AP family. Homodimer. Component of the nucleosome remodeling and deacetylase (NuRD) repressor complex, composed of core proteins MTA1, MTA2, MTA3, RBBP4, RBBP7, HDAC1, HDAC2, MBD2, MBD3, and peripherally associated proteins CDK2AP1, CDK2AP2, GATAD2A, GATAD2B, CHD3, CHD4 and CHD5. The exact stoichiometry of the NuRD complex is unknown, and some subunits such as MBD2 and MBD3, GATAD2A and GATAD2B, and CHD3, CHD4 and CHD5 define mutually exclusive NuRD complexes. Interacts with monomeric unphosphorylated CDK2. Interacts with CDK2AP2. Interacts with GATAD2A. Interacts with HDAC1. Interacts with HDAC2. Interacts with MBD2. Interacts with MBD3. Interacts with RBBP4. Interacts with RBBP7. In terms of processing, phosphorylated in vitro by IKBKE at Ser-45.

The protein localises to the nucleus. It is found in the chromosome. Inhibitor of cyclin-dependent kinase CDK2. Also acts as a component of the histone deacetylase NuRD complex which participates in the remodeling of chromatin. This Mus musculus (Mouse) protein is Cyclin-dependent kinase 2-associated protein 1 (Cdk2ap1).